Here is a 220-residue protein sequence, read N- to C-terminus: Adapter protein MecA (220 aa).

Belongs to the MecA family. Homodimer.

Functionally, enables the recognition and targeting of unfolded and aggregated proteins to the ClpC protease or to other proteins involved in proteolysis. The chain is Adapter protein MecA from Enterococcus faecalis (strain ATCC 700802 / V583).